The primary structure comprises 511 residues: Maturase K (511 aa).

Belongs to the intron maturase 2 family. MatK subfamily.

It is found in the plastid. Its subcellular location is the chloroplast. In terms of biological role, usually encoded in the trnK tRNA gene intron. Probably assists in splicing its own and other chloroplast group II introns. This is Maturase K from Bromelia plumieri (Karatas).